We begin with the raw amino-acid sequence, 68 residues long: U4-agatoxin-Ao1a (68 aa).

An N-terminal signal peptide occupies residues 1 to 25 (MKKSTVIVLSLAAFVLLSVMQFSAA). The propeptide occupies 26-36 (EDIKMEVEEQR). Intrachain disulfides connect C39-C52, C46-C57, C51-C66, and C59-C64.

Belongs to the neurotoxin 33 family. As to expression, expressed by the venom gland.

It localises to the secreted. The protein is U4-agatoxin-Ao1a of Agelena orientalis (Funnel-web spider).